A 74-amino-acid chain; its full sequence is UPF0435 protein BCB4264_A0471 (74 aa).

This sequence belongs to the UPF0435 family.

The chain is UPF0435 protein BCB4264_A0471 from Bacillus cereus (strain B4264).